The sequence spans 253 residues: 28 kDa inner dynein arm light chain, axonemal (253 aa).

The tract at residues 19 to 44 is disordered; the sequence is TSKDKGKGAKGTPGKKGALPPVEQKP. The stretch at 160-239 forms a coiled coil; it reads IRKALQTEQG…LKQQLETFLV (80 aa).

It belongs to the inner dynein arm light chain family.

Its subcellular location is the cytoplasm. The protein localises to the cytoskeleton. It is found in the flagellum axoneme. Plays a dynamic role in flagellar motility. May be necessary for stable assembly of a subset of inner dynein arms or for the binding of these arms to the outer doublet microtubules of the axoneme. In Chlamydomonas reinhardtii (Chlamydomonas smithii), this protein is 28 kDa inner dynein arm light chain, axonemal (IDA4).